A 277-amino-acid chain; its full sequence is tRNA pseudouridine synthase A (277 aa).

The active-site Nucleophile is aspartate 57. Residue tyrosine 115 participates in substrate binding.

This sequence belongs to the tRNA pseudouridine synthase TruA family. As to quaternary structure, homodimer.

It catalyses the reaction uridine(38/39/40) in tRNA = pseudouridine(38/39/40) in tRNA. In terms of biological role, formation of pseudouridine at positions 38, 39 and 40 in the anticodon stem and loop of transfer RNAs. In Nitratidesulfovibrio vulgaris (strain DSM 19637 / Miyazaki F) (Desulfovibrio vulgaris), this protein is tRNA pseudouridine synthase A.